The following is a 348-amino-acid chain: Protein RecA (348 aa).

69 to 76 is a binding site for ATP; it reads GPESSGKT.

The protein belongs to the RecA family.

The protein resides in the cytoplasm. In terms of biological role, can catalyze the hydrolysis of ATP in the presence of single-stranded DNA, the ATP-dependent uptake of single-stranded DNA by duplex DNA, and the ATP-dependent hybridization of homologous single-stranded DNAs. It interacts with LexA causing its activation and leading to its autocatalytic cleavage. The polypeptide is Protein RecA (Gluconacetobacter polyoxogenes (Acetobacter polyoxogenes)).